Reading from the N-terminus, the 602-residue chain is Probable translation initiation factor IF-2 (602 aa).

In terms of domain architecture, tr-type G spans 18–233 (LRTPIVCVMG…LVGLAQRFLK (216 aa)). The tract at residues 27–34 (GHVDHGKT) is G1. 27-34 (GHVDHGKT) serves as a coordination point for GTP. Residues 52 to 56 (AITQH) form a G2 region. A G3 region spans residues 88-91 (DTPG). GTP is bound by residues 88–92 (DTPGH) and 142–145 (NKID). The interval 142–145 (NKID) is G4. A G5 region spans residues 210–212 (SAI).

The protein belongs to the TRAFAC class translation factor GTPase superfamily. Classic translation factor GTPase family. IF-2 subfamily.

Function in general translation initiation by promoting the binding of the formylmethionine-tRNA to ribosomes. Seems to function along with eIF-2. This Methanothrix thermoacetophila (strain DSM 6194 / JCM 14653 / NBRC 101360 / PT) (Methanosaeta thermophila) protein is Probable translation initiation factor IF-2.